The sequence spans 631 residues: 1,4-alpha-glucan branching enzyme GlgB (631 aa).

Asp309 functions as the Nucleophile in the catalytic mechanism. The active-site Proton donor is the Glu362.

This sequence belongs to the glycosyl hydrolase 13 family. GlgB subfamily. In terms of assembly, monomer.

It catalyses the reaction Transfers a segment of a (1-&gt;4)-alpha-D-glucan chain to a primary hydroxy group in a similar glucan chain.. It participates in glycan biosynthesis; glycogen biosynthesis. Catalyzes the formation of the alpha-1,6-glucosidic linkages in glycogen by scission of a 1,4-alpha-linked oligosaccharide from growing alpha-1,4-glucan chains and the subsequent attachment of the oligosaccharide to the alpha-1,6 position. This Marinobacter nauticus (strain ATCC 700491 / DSM 11845 / VT8) (Marinobacter aquaeolei) protein is 1,4-alpha-glucan branching enzyme GlgB.